The primary structure comprises 64 residues: Large ribosomal subunit protein uL29 (64 aa).

The protein belongs to the universal ribosomal protein uL29 family.

The sequence is that of Large ribosomal subunit protein uL29 from Cupriavidus metallidurans (strain ATCC 43123 / DSM 2839 / NBRC 102507 / CH34) (Ralstonia metallidurans).